We begin with the raw amino-acid sequence, 106 residues long: Large ribosomal subunit protein uL23 (106 aa).

This sequence belongs to the universal ribosomal protein uL23 family. Part of the 50S ribosomal subunit. Contacts protein L29, and trigger factor when it is bound to the ribosome.

One of the early assembly proteins it binds 23S rRNA. One of the proteins that surrounds the polypeptide exit tunnel on the outside of the ribosome. Forms the main docking site for trigger factor binding to the ribosome. The chain is Large ribosomal subunit protein uL23 from Neisseria meningitidis serogroup C / serotype 2a (strain ATCC 700532 / DSM 15464 / FAM18).